A 258-amino-acid polypeptide reads, in one-letter code: tRNA pseudouridine synthase A (258 aa).

Asp-55 functions as the Nucleophile in the catalytic mechanism. Tyr-113 is a substrate binding site.

The protein belongs to the tRNA pseudouridine synthase TruA family. In terms of assembly, homodimer.

The catalysed reaction is uridine(38/39/40) in tRNA = pseudouridine(38/39/40) in tRNA. Functionally, formation of pseudouridine at positions 38, 39 and 40 in the anticodon stem and loop of transfer RNAs. The sequence is that of tRNA pseudouridine synthase A from Limosilactobacillus fermentum (strain NBRC 3956 / LMG 18251) (Lactobacillus fermentum).